We begin with the raw amino-acid sequence, 407 residues long: Putative F-box protein At5g60560 (407 aa).

Residues 2 to 49 (TMMSDLSEDLVEEILCRVSITSLGAVRSTCKGWYVLSKTRVLCKAETK) form the F-box domain.

The sequence is that of Putative F-box protein At5g60560 from Arabidopsis thaliana (Mouse-ear cress).